Reading from the N-terminus, the 506-residue chain is Chromosomal replication initiator protein DnaA (506 aa).

The tract at residues methionine 1–arginine 87 is domain I, interacts with DnaA modulators. The tract at residues arginine 87–serine 169 is domain II. The disordered stretch occupies residues aspartate 135–alanine 154. Over residues alanine 139–proline 148 the composition is skewed to low complexity. Residues tyrosine 170–serine 386 are domain III, AAA+ region. The ATP site is built by glycine 214, glycine 216, lysine 217, and threonine 218. A domain IV, binds dsDNA region spans residues histidine 387 to threonine 506.

Belongs to the DnaA family. As to quaternary structure, oligomerizes as a right-handed, spiral filament on DNA at oriC.

It localises to the cytoplasm. Functionally, plays an essential role in the initiation and regulation of chromosomal replication. ATP-DnaA binds to the origin of replication (oriC) to initiate formation of the DNA replication initiation complex once per cell cycle. Binds the DnaA box (a 9 base pair repeat at the origin) and separates the double-stranded (ds)DNA. Forms a right-handed helical filament on oriC DNA; dsDNA binds to the exterior of the filament while single-stranded (ss)DNA is stabiized in the filament's interior. The ATP-DnaA-oriC complex binds and stabilizes one strand of the AT-rich DNA unwinding element (DUE), permitting loading of DNA polymerase. After initiation quickly degrades to an ADP-DnaA complex that is not apt for DNA replication. Binds acidic phospholipids. In terms of biological role, non-cooperatively binds DnaA boxes in the minimal plasmid RK2 replication origin (oriV). In vitro in the presence of plasmid RK2-derived TrfA and E.coli protein HU, forms an open complex at oriV. This complex was not however competent for formation of a pre-priming complex with E.coli DnaB and DnaC. Broad host range plasmid RK2 requires not only DnaA for replication but also TrfA and host factors. The polypeptide is Chromosomal replication initiator protein DnaA (Pseudomonas putida (strain ATCC 47054 / DSM 6125 / CFBP 8728 / NCIMB 11950 / KT2440)).